Reading from the N-terminus, the 332-residue chain is Ketol-acid reductoisomerase (NADP(+)) (332 aa).

One can recognise a KARI N-terminal Rossmann domain in the interval 4–184; sequence ARMYYDEDAD…GGTRAGILET (181 aa). NADP(+)-binding positions include 27–30, S53, S55, and 85–88; these read YGSQ and DEVQ. The active site involves H110. NADP(+) is bound at residue G136. The region spanning 185–330 is the KARI C-terminal knotted domain; that stretch reads TFREEAETDL…ADLRKMMSWL (146 aa). Mg(2+)-binding residues include D193, E197, E229, and E233. S254 is a substrate binding site.

The protein belongs to the ketol-acid reductoisomerase family. Mg(2+) is required as a cofactor.

It carries out the reaction (2R)-2,3-dihydroxy-3-methylbutanoate + NADP(+) = (2S)-2-acetolactate + NADPH + H(+). It catalyses the reaction (2R,3R)-2,3-dihydroxy-3-methylpentanoate + NADP(+) = (S)-2-ethyl-2-hydroxy-3-oxobutanoate + NADPH + H(+). It functions in the pathway amino-acid biosynthesis; L-isoleucine biosynthesis; L-isoleucine from 2-oxobutanoate: step 2/4. Its pathway is amino-acid biosynthesis; L-valine biosynthesis; L-valine from pyruvate: step 2/4. Its function is as follows. Involved in the biosynthesis of branched-chain amino acids (BCAA). Catalyzes an alkyl-migration followed by a ketol-acid reduction of (S)-2-acetolactate (S2AL) to yield (R)-2,3-dihydroxy-isovalerate. In the isomerase reaction, S2AL is rearranged via a Mg-dependent methyl migration to produce 3-hydroxy-3-methyl-2-ketobutyrate (HMKB). In the reductase reaction, this 2-ketoacid undergoes a metal-dependent reduction by NADPH to yield (R)-2,3-dihydroxy-isovalerate. This chain is Ketol-acid reductoisomerase (NADP(+)), found in Gloeobacter violaceus (strain ATCC 29082 / PCC 7421).